The sequence spans 394 residues: QWRF motif-containing protein 7 (394 aa).

Residues 1 to 171 are disordered; it reads MATTGRRLRP…ESPVSKAKIR (171 aa). Positions 14–67 are enriched in low complexity; it reads NNNRSRTISSSISLPVSLNASLSSSTSSSSSSSPSNSSKRVMITRSQSTTRSSR. Polar residues predominate over residues 85-96; the sequence is NSASRSQEINNG. Positions 97–110 are enriched in basic and acidic residues; that stretch reads RSRESFARYLEQRT. Polar residues-rich tracts occupy residues 111–120 and 142–157; these read RGSPRSNASS and TMKT…TSMC. The QWRF motif motif lies at 211–214; the sequence is QWRF.

It belongs to the QWRF family.

The protein is QWRF motif-containing protein 7 (QWRF7) of Arabidopsis thaliana (Mouse-ear cress).